Here is a 487-residue protein sequence, read N- to C-terminus: Serine/threonine-protein kinase 4 (487 aa).

Methionine 1 carries the post-translational modification N-acetylmethionine. At threonine 3 the chain carries Phosphothreonine. The region spanning 30–281 (FDVLEKLGEG…ATQLLQHPFV (252 aa)) is the Protein kinase domain. ATP contacts are provided by residues 36–44 (LGEGSYGSV) and lysine 59. Catalysis depends on aspartate 149, which acts as the Proton acceptor. Threonine 183 is subject to Phosphothreonine; by autocatalysis. Position 265 is a phosphoserine (serine 265). Positions 290 to 310 (LRDLINEAMDVKLKRQESQQR) form a coiled coil. The span at 303–312 (KRQESQQREV) shows a compositional bias: basic and acidic residues. Residues 303–332 (KRQESQQREVDQDDEENSEEDEMDSGTMVR) are disordered. Acidic residues predominate over residues 313–326 (DQDDEENSEEDEMD). Phosphoserine is present on serine 320. Threonine 340 and threonine 367 each carry phosphothreonine. The residue at position 387 (threonine 387) is a Phosphothreonine; by PKB/AKT1. 2 positions are modified to phosphoserine: serine 410 and serine 414. Tyrosine 433 is modified (phosphotyrosine). An SARAH domain is found at 433–480 (YEFLKSWTVEDLQKRLLALDPMMEQEIEEIRQKYQSKRQPILDAIEAK).

The protein belongs to the protein kinase superfamily. STE Ser/Thr protein kinase family. STE20 subfamily. In terms of assembly, homodimer; mediated via the coiled-coil region. Interacts with NORE1, which inhibits autoactivation. Interacts with and stabilizes SAV1. Interacts with RASSF1. Interacts with FOXO3. Interacts with RASSF2 (via SARAH domain). Interacts with AR, PKB/AKT1, TNNI3 and SIRT1. Interacts with DLG5 (via PDZ domain 3). Interacts with MARK3 and SCRIB in the presence of DLG5. The cofactor is Mg(2+). In terms of processing, autophosphorylated on serine and threonine residues. Phosphorylation at Thr-387 by PKB/AKT1, leads to inhibition of its: kinase activity, nuclear translocation and autophosphorylation at Thr-183. It also diminishes its cleavage by caspases and its ability to phosphorylate FOXO3. Proteolytically cleaved by caspase-3 during apoptosis at Asp-326 and Asp-349 resulting in a 37 kDa or a 39 kDa subunit respectively. The 39 kDa subunit is further cleaved into the 37 kDa form. Proteolytic cleavage results in kinase activation and nuclear translocation of the truncated form (MST1/N). It is less likely that cleavage at Asp-349 is a prerequisite for activation as this site is not conserved in the murine ortholog.

The protein localises to the cytoplasm. It localises to the nucleus. It catalyses the reaction L-seryl-[protein] + ATP = O-phospho-L-seryl-[protein] + ADP + H(+). The enzyme catalyses L-threonyl-[protein] + ATP = O-phospho-L-threonyl-[protein] + ADP + H(+). With respect to regulation, inhibited by the C-terminal non-catalytic region. Activated by caspase-cleavage. Full activation also requires homodimerization and autophosphorylation of Thr-183. Activated by RASSF1 which acts by preventing its dephosphorylation. Stress-activated, pro-apoptotic kinase which, following caspase-cleavage, enters the nucleus and induces chromatin condensation followed by internucleosomal DNA fragmentation. Key component of the Hippo signaling pathway which plays a pivotal role in organ size control and tumor suppression by restricting proliferation and promoting apoptosis. The core of this pathway is composed of a kinase cascade wherein STK3/MST2 and STK4/MST1, in complex with its regulatory protein SAV1, phosphorylates and activates LATS1/2 in complex with its regulatory protein MOB1, which in turn phosphorylates and inactivates YAP1 oncoprotein and WWTR1/TAZ. Phosphorylation of YAP1 by LATS2 inhibits its translocation into the nucleus to regulate cellular genes important for cell proliferation, cell death, and cell migration. STK3/MST2 and STK4/MST1 are required to repress proliferation of mature hepatocytes, to prevent activation of facultative adult liver stem cells (oval cells), and to inhibit tumor formation. Phosphorylates 'Ser-14' of histone H2B (H2BS14ph) during apoptosis. Phosphorylates FOXO3 upon oxidative stress, which results in its nuclear translocation and cell death initiation. Phosphorylates MOBKL1A, MOBKL1B and RASSF2. Phosphorylates TNNI3 (cardiac Tn-I) and alters its binding affinity to TNNC1 (cardiac Tn-C) and TNNT2 (cardiac Tn-T). Phosphorylates FOXO1 on 'Ser-212' and regulates its activation and stimulates transcription of PMAIP1 in a FOXO1-dependent manner. Phosphorylates SIRT1 and inhibits SIRT1-mediated p53/TP53 deacetylation, thereby promoting p53/TP53 dependent transcription and apoptosis upon DNA damage. Acts as an inhibitor of PKB/AKT1. Phosphorylates AR on 'Ser-650' and suppresses its activity by intersecting with PKB/AKT1 signaling and antagonizing formation of AR-chromatin complexes. This is Serine/threonine-protein kinase 4 (STK4) from Papio anubis (Olive baboon).